The chain runs to 194 residues: WASH complex subunit 3 (194 aa).

Position 1 is an N-acetylmethionine (Met-1). Residues 46–74 (TVCEEKLADLSLRIQQIETTLNILDAKLS) are a coiled coil. Disordered stretches follow at residues 93 to 121 (SVTNGAHPEATSEQPQQNSTQDSGLQESE) and 159 to 194 (EGLDPDLLERPDAPVPDGESEKTVEESSDSESSFSD). Residues 103–121 (TSEQPQQNSTQDSGLQESE) are compositionally biased toward polar residues.

The protein belongs to the CCDC53 family. Component of the WASH core complex also described as WASH regulatory complex (SHRC) composed of WASH (WASHC1, WASH2P or WASH3P), WASHC2 (WASHC2A or WASHC2C), WASHC3, WASHC4 and WASHC5. The WASH core complex associates via WASHC2 with the F-actin-capping protein dimer (formed by CAPZA1, CAPZA2 or CAPZA3 and CAPZB) in a transient or substoichiometric manner which was initially described as WASH complex.

It localises to the early endosome. In terms of biological role, acts as a component of the WASH core complex that functions as a nucleation-promoting factor (NPF) at the surface of endosomes, where it recruits and activates the Arp2/3 complex to induce actin polymerization, playing a key role in the fission of tubules that serve as transport intermediates during endosome sorting. This Homo sapiens (Human) protein is WASH complex subunit 3.